We begin with the raw amino-acid sequence, 169 residues long: MSTHFSANQYEKSFDAKRLQNWEVPKHFKEHPSSLEGFTQIISNDRGHILEGIPRSSRSPWGEFVGTWDMTKPPLRTKTLKTKAMTENAQQKRKSASPKQEVARTPSPAKASPRRDSPVQASPRNASPLQGSPKKASAEKVCTPSPKAASVSPVANKSPSPKLATPEPC.

A disordered region spans residues 53–169 (IPRSSRSPWG…SPKLATPEPC (117 aa)). The span at 119 to 130 (VQASPRNASPLQ) shows a compositional bias: polar residues.

This sequence belongs to the Flattop family.

It is found in the cytoplasm. The protein localises to the cytoskeleton. It localises to the cilium basal body. Its subcellular location is the cell projection. The protein resides in the cilium. It is found in the apical cell membrane. Functionally, acts as a regulator of cilium basal body docking and positioning in mono- and multiciliated cells. The chain is Protein Flattop homolog from Nematostella vectensis (Starlet sea anemone).